The primary structure comprises 496 residues: Glycerol kinase (496 aa).

Residue Thr-12 coordinates ADP. ATP-binding residues include Thr-12, Thr-13, and Ser-14. Thr-12 contacts sn-glycerol 3-phosphate. Arg-16 is an ADP binding site. Sn-glycerol 3-phosphate-binding residues include Arg-82, Glu-83, and Tyr-134. Glycerol contacts are provided by Arg-82, Glu-83, and Tyr-134. His-230 carries the phosphohistidine; by HPr modification. Asp-244 contacts sn-glycerol 3-phosphate. Glycerol is bound by residues Asp-244 and Gln-245. The ADP site is built by Thr-266 and Gly-309. ATP contacts are provided by Thr-266, Gly-309, Gln-313, and Gly-410. Residues Gly-410 and Asn-414 each coordinate ADP.

This sequence belongs to the FGGY kinase family. As to quaternary structure, homotetramer and homodimer (in equilibrium). In terms of processing, the phosphoenolpyruvate-dependent sugar phosphotransferase system (PTS), including enzyme I, and histidine-containing protein (HPr) are required for the phosphorylation, which leads to the activation of the enzyme.

The catalysed reaction is glycerol + ATP = sn-glycerol 3-phosphate + ADP + H(+). Its pathway is polyol metabolism; glycerol degradation via glycerol kinase pathway; sn-glycerol 3-phosphate from glycerol: step 1/1. With respect to regulation, activated by phosphorylation and inhibited by fructose 1,6-bisphosphate (FBP). Key enzyme in the regulation of glycerol uptake and metabolism. Catalyzes the phosphorylation of glycerol to yield sn-glycerol 3-phosphate. The sequence is that of Glycerol kinase from Bacillus subtilis (strain 168).